A 513-amino-acid polypeptide reads, in one-letter code: Carboxyethyl-arginine beta-lactam-synthase (513 aa).

Residues Asp253 and Asp351 each coordinate Mg(2+).

The protein belongs to the asparagine synthetase family. In terms of assembly, homodimer. Mg(2+) is required as a cofactor.

The catalysed reaction is N(2)-(2-carboxyethyl)-L-arginine + ATP = deoxyamidinoproclavaminate + AMP + diphosphate + H(+). Its pathway is antibiotic biosynthesis; clavulanate biosynthesis; clavulanate from D-glyceraldehyde 3-phosphate and L-arginine: step 2/8. In Streptomyces clavuligerus, this protein is Carboxyethyl-arginine beta-lactam-synthase (bls).